A 396-amino-acid chain; its full sequence is NADH-quinone oxidoreductase subunit D 1 (396 aa).

This sequence belongs to the complex I 49 kDa subunit family. In terms of assembly, NDH-1 is composed of 14 different subunits. Subunits NuoB, C, D, E, F, and G constitute the peripheral sector of the complex.

The protein resides in the cell inner membrane. The enzyme catalyses a quinone + NADH + 5 H(+)(in) = a quinol + NAD(+) + 4 H(+)(out). Functionally, NDH-1 shuttles electrons from NADH, via FMN and iron-sulfur (Fe-S) centers, to quinones in the respiratory chain. The immediate electron acceptor for the enzyme in this species is believed to be ubiquinone. Couples the redox reaction to proton translocation (for every two electrons transferred, four hydrogen ions are translocated across the cytoplasmic membrane), and thus conserves the redox energy in a proton gradient. This chain is NADH-quinone oxidoreductase subunit D 1, found in Rhizobium etli (strain CIAT 652).